Consider the following 311-residue polypeptide: Probable branched-chain-amino-acid aminotransferase (311 aa).

Lys160 carries the post-translational modification N6-(pyridoxal phosphate)lysine.

The protein belongs to the class-IV pyridoxal-phosphate-dependent aminotransferase family. Pyridoxal 5'-phosphate serves as cofactor.

The enzyme catalyses L-leucine + 2-oxoglutarate = 4-methyl-2-oxopentanoate + L-glutamate. It carries out the reaction L-isoleucine + 2-oxoglutarate = (S)-3-methyl-2-oxopentanoate + L-glutamate. It catalyses the reaction L-valine + 2-oxoglutarate = 3-methyl-2-oxobutanoate + L-glutamate. It functions in the pathway amino-acid biosynthesis; L-isoleucine biosynthesis; L-isoleucine from 2-oxobutanoate: step 4/4. It participates in amino-acid biosynthesis; L-leucine biosynthesis; L-leucine from 3-methyl-2-oxobutanoate: step 4/4. Its pathway is amino-acid biosynthesis; L-valine biosynthesis; L-valine from pyruvate: step 4/4. Functionally, acts on leucine, isoleucine and valine. The sequence is that of Probable branched-chain-amino-acid aminotransferase (ilvE) from Aquifex aeolicus (strain VF5).